The following is a 480-amino-acid chain: Probable cyclodipeptide synthase PUL1 (480 aa).

It participates in siderophore biosynthesis. Functionally, probable cyclodipeptide synthase; part of the PUL gene cluster that mediates the formation of pulcherrimin, a red iron-containing pigment composed of two cyclized and modified leucine molecules that acts as a siderophore, a chelator that binds iron outside the cell for subsequent uptake. Two leucine molecules are cyclized via a cyclodipeptide synthase, and the resulting diketopiperazine is oxidized by a cytochrome P450 monooxygenase to generate pulcherriminic acid (PA), which can then spontaneously bind iron to form pulcherrimin. The probable cyclodipeptide synthase PUL1 and the cytochrome P450 monooxygenase PUL2 encode the enzymes responsible for the two-step pulcherrimin biosynthesis pathway. In Kluyveromyces lactis (strain ATCC 8585 / CBS 2359 / DSM 70799 / NBRC 1267 / NRRL Y-1140 / WM37) (Yeast), this protein is Probable cyclodipeptide synthase PUL1.